A 461-amino-acid polypeptide reads, in one-letter code: ATP synthase subunit beta (461 aa).

151-158 serves as a coordination point for ATP; sequence GGAGVGKT.

Belongs to the ATPase alpha/beta chains family. In terms of assembly, F-type ATPases have 2 components, CF(1) - the catalytic core - and CF(0) - the membrane proton channel. CF(1) has five subunits: alpha(3), beta(3), gamma(1), delta(1), epsilon(1). CF(0) has three main subunits: a(1), b(2) and c(9-12). The alpha and beta chains form an alternating ring which encloses part of the gamma chain. CF(1) is attached to CF(0) by a central stalk formed by the gamma and epsilon chains, while a peripheral stalk is formed by the delta and b chains.

The protein resides in the cell inner membrane. The catalysed reaction is ATP + H2O + 4 H(+)(in) = ADP + phosphate + 5 H(+)(out). Produces ATP from ADP in the presence of a proton gradient across the membrane. The catalytic sites are hosted primarily by the beta subunits. In Idiomarina loihiensis (strain ATCC BAA-735 / DSM 15497 / L2-TR), this protein is ATP synthase subunit beta.